The primary structure comprises 1763 residues: Non-reducing polyketide synthase PKS19 (1763 aa).

The interval 20 to 261 (GDQRNLFRKL…PMKKVQGMWH (242 aa)) is N-terminal acylcarrier protein transacylase domain (SAT). Residues 390–822 (SSKIAVVGMA…GGNTSIIIEE (433 aa)) enclose the Ketosynthase family 3 (KS3) domain. Active-site for beta-ketoacyl synthase activity residues include C561, H696, and H740. The malonyl-CoA:ACP transacylase (MAT) domain stretch occupies residues 922–1227 (FAFTGQGTFY…QRDTDNWLTL (306 aa)). The tract at residues 1307–1439 (HRLISEQYTD…VFYEDPSSWL (133 aa)) is N-terminal hotdog fold. The region spanning 1307-1609 (HRLISEQYTD…FLQWPRVMLN (303 aa)) is the PKS/mFAS DH domain. The interval 1334-1588 (GVVDGHAMNG…FVGDVYVLQG (255 aa)) is product template (PT) domain. The active-site Proton acceptor; for dehydratase activity is the H1339. Residues 1461–1609 (VTGKASKLTT…FLQWPRVMLN (149 aa)) form a C-terminal hotdog fold region. The Proton donor; for dehydratase activity role is filled by D1522. The interval 1619–1690 (AKPAAKVPGK…MEELPSPPAG (72 aa)) is disordered. Over residues 1635–1647 (PHFKPHHVSRHKP) the composition is skewed to basic residues. One can recognise a Carrier domain in the interval 1689–1763 (AGMNDDMEKA…TIQDLKALLR (75 aa)). An O-(pantetheine 4'-phosphoryl)serine modification is found at S1726.

Its function is as follows. Non-reducing polyketide synthase that mediates the biosynthesis of alternariol (AOH), a micotoxin that seems not to be involved in virulence and oxidative stress tolerance. PKS19 alone is sufficient for AOH synthesis which is initiated by priming with acetyl-CoA, followed by sequential condensations of 6 malonyl-CoA units. The protein is Non-reducing polyketide synthase PKS19 of Phaeosphaeria nodorum (strain SN15 / ATCC MYA-4574 / FGSC 10173) (Glume blotch fungus).